The chain runs to 695 residues: HIPL1 protein (695 aa).

The first 23 residues, 1–23 (MKLHQFLVFLFLFLSCFALSSWA), serve as a signal peptide directing secretion. Asn37, Asn67, Asn107, Asn113, Asn128, Asn151, Asn175, Asn190, Asn208, Asn337, Asn429, Asn511, Asn527, Asn641, and Asn648 each carry an N-linked (GlcNAc...) asparagine glycan. Ser665 carries the GPI-anchor amidated serine lipid modification. The propeptide at 666–695 (SSCYKHINGFHGSLVVLFVSLSLILLGLLN) is removed in mature form.

It belongs to the PQQ oxidoreductase GdhB family. Pyrroloquinoline quinone serves as cofactor.

It localises to the cell membrane. This is HIPL1 protein (HIPL1) from Arabidopsis thaliana (Mouse-ear cress).